A 486-amino-acid polypeptide reads, in one-letter code: Ribulose bisphosphate carboxylase large chain (486 aa).

Positions 1 to 2 are excised as a propeptide; the sequence is MS. Substrate is bound by residues Asn-123 and Thr-173. The active-site Proton acceptor is the Lys-175. Substrate is bound at residue Lys-177. Lys-201, Asp-203, and Glu-204 together coordinate Mg(2+). Lys-201 carries the N6-carboxylysine modification. Residue Ser-208 is modified to Phosphoserine. His-294 serves as the catalytic Proton acceptor. Substrate-binding residues include Arg-295 and His-327. At Thr-330 the chain carries Phosphothreonine. A substrate-binding site is contributed by Ser-379.

Belongs to the RuBisCO large chain family. Type I subfamily. As to quaternary structure, heterohexadecamer of 8 large chains and 8 small chains; disulfide-linked. The disulfide link is formed within the large subunit homodimers. The cofactor is Mg(2+). Post-translationally, the disulfide bond which can form in the large chain dimeric partners within the hexadecamer appears to be associated with oxidative stress and protein turnover.

The protein resides in the plastid. Its subcellular location is the chloroplast. It catalyses the reaction 2 (2R)-3-phosphoglycerate + 2 H(+) = D-ribulose 1,5-bisphosphate + CO2 + H2O. The catalysed reaction is D-ribulose 1,5-bisphosphate + O2 = 2-phosphoglycolate + (2R)-3-phosphoglycerate + 2 H(+). RuBisCO catalyzes two reactions: the carboxylation of D-ribulose 1,5-bisphosphate, the primary event in carbon dioxide fixation, as well as the oxidative fragmentation of the pentose substrate in the photorespiration process. Both reactions occur simultaneously and in competition at the same active site. The sequence is that of Ribulose bisphosphate carboxylase large chain from Aethionema grandiflorum (Persian stone-cress).